A 326-amino-acid chain; its full sequence is Peroxidase 3 (326 aa).

A signal peptide spans 1–24 (MNCLIAIALSVSFFLVGIVGPIQA). Cystine bridges form between Cys-35-Cys-113, Cys-68-Cys-73, Cys-119-Cys-321, and Cys-198-Cys-231. His-66 functions as the Proton acceptor in the catalytic mechanism. Ca(2+)-binding residues include Asp-67, Val-70, Gly-72, Asp-74, and Ser-76. N-linked (GlcNAc...) asparagine glycosylation is found at Asn-80 and Asn-138. Residue Pro-161 participates in substrate binding. The N-linked (GlcNAc...) asparagine glycan is linked to Asn-166. Position 191 (His-191) interacts with heme b. A Ca(2+)-binding site is contributed by Thr-192. Residues Asn-207 and Asn-237 are each glycosylated (N-linked (GlcNAc...) asparagine). Ca(2+) contacts are provided by Asp-244, Ser-247, and Asp-252.

It belongs to the peroxidase family. Classical plant (class III) peroxidase subfamily. Heme b is required as a cofactor. It depends on Ca(2+) as a cofactor. As to expression, expressed in root cells.

Its subcellular location is the secreted. The catalysed reaction is 2 a phenolic donor + H2O2 = 2 a phenolic radical donor + 2 H2O. In terms of biological role, removal of H(2)O(2), oxidation of toxic reductants, biosynthesis and degradation of lignin, suberization, auxin catabolism, response to environmental stresses such as wounding, pathogen attack and oxidative stress. These functions might be dependent on each isozyme/isoform in each plant tissue. This chain is Peroxidase 3 (PER3), found in Arabidopsis thaliana (Mouse-ear cress).